The sequence spans 512 residues: Cytochrome P450 76C2 (512 aa).

A helical transmembrane segment spans residues 3–23 (IIFEQALFPLFCFVLSFFIIF). Position 451 (C451) interacts with heme.

The protein belongs to the cytochrome P450 family. Heme serves as cofactor.

It is found in the membrane. The protein is Cytochrome P450 76C2 (CYP76C2) of Arabidopsis thaliana (Mouse-ear cress).